Consider the following 187-residue polypeptide: Meiotically up-regulated gene 155 protein (187 aa).

Residues 1–24 form a disordered region; the sequence is MRPTSGCSKDDTIQKQNRRHNTVD. The next 2 helical transmembrane spans lie at 83 to 105 and 163 to 183; these read IISY…PFSH and VMLT…LFIF.

It is found in the cytoplasm. The protein resides in the nucleus membrane. In terms of biological role, has a role in meiosis. This chain is Meiotically up-regulated gene 155 protein (mug155), found in Schizosaccharomyces pombe (strain 972 / ATCC 24843) (Fission yeast).